Reading from the N-terminus, the 143-residue chain is Anti-sigma F factor (143 aa).

The protein belongs to the anti-sigma-factor family.

It carries out the reaction L-seryl-[protein] + ATP = O-phospho-L-seryl-[protein] + ADP + H(+). The enzyme catalyses L-threonyl-[protein] + ATP = O-phospho-L-threonyl-[protein] + ADP + H(+). Binds to sigma F and blocks its ability to form an RNA polymerase holoenzyme (E-sigma F). Phosphorylates SpoIIAA on a serine residue. This phosphorylation may enable SpoIIAA to act as an anti-anti-sigma factor that counteracts SpoIIAB and thus releases sigma F from inhibition. This Clostridium novyi (strain NT) protein is Anti-sigma F factor.